The chain runs to 145 residues: Large ribosomal subunit protein uL13 (145 aa).

It belongs to the universal ribosomal protein uL13 family. As to quaternary structure, part of the 50S ribosomal subunit.

In terms of biological role, this protein is one of the early assembly proteins of the 50S ribosomal subunit, although it is not seen to bind rRNA by itself. It is important during the early stages of 50S assembly. This Geobacillus thermodenitrificans (strain NG80-2) protein is Large ribosomal subunit protein uL13.